Here is a 214-residue protein sequence, read N- to C-terminus: Ceramide-1-phosphate transfer protein (214 aa).

Positions 56, 60, 106, 110, and 150 each coordinate an N-acylsphingoid base 1-phosphate.

Belongs to the GLTP family. Ubiquitous. Detected in heart, brain, placenta, lung, liver, skeletal muscle, kidney, pancreas, spleen, thymus, prostate, testis, ovary, small intestine, colon and peripheral blood leukocytes.

It localises to the cytoplasm. The protein resides in the cytosol. Its subcellular location is the golgi apparatus. The protein localises to the trans-Golgi network membrane. It is found in the cell membrane. It localises to the endosome membrane. The protein resides in the nucleus outer membrane. It carries out the reaction N-(hexadecanoyl)-sphing-4-enine-1-phosphate(in) = N-(hexadecanoyl)-sphing-4-enine-1-phosphate(out). It catalyses the reaction N-(9Z-octadecenoyl)-sphing-4-enine-1-phosphate(in) = N-(9Z-octadecenoyl)-sphing-4-enine-1-phosphate(out). In terms of biological role, mediates the intracellular transfer of ceramide-1-phosphate (C1P) between organelle membranes and the cell membrane. Required for normal structure of the Golgi stacks. Can bind phosphoceramides with a variety of aliphatic chains, but has a preference for lipids with saturated C16:0 or monounsaturated C18:1 aliphatic chains, and is inefficient with phosphoceramides containing lignoceryl (C24:0). Plays a role in the regulation of the cellular levels of ceramide-1-phosphate, and thereby contributes to the regulation of phospholipase PLA2G4A activity and the release of arachidonic acid. Has no activity with galactosylceramide, lactosylceramide, sphingomyelin, phosphatidylcholine, phosphatidic acid and ceramide. C1P transfer is stimulated by phosphatidylserine in C1P source vesicles. Regulates autophagy, inflammasome mediated IL1B and IL18 processing, and pyroptosis, but not apoptosis. The protein is Ceramide-1-phosphate transfer protein of Homo sapiens (Human).